The sequence spans 602 residues: Aspartate--tRNA(Asp/Asn) ligase (602 aa).

An L-aspartate-binding site is contributed by E176. Residues 200-203 (QQFK) form an aspartate region. R222 and H452 together coordinate L-aspartate. ATP is bound at residue 222-224 (RDE). Residue E490 participates in ATP binding. R497 contributes to the L-aspartate binding site. 542 to 545 (GIDR) contacts ATP.

Belongs to the class-II aminoacyl-tRNA synthetase family. Type 1 subfamily. As to quaternary structure, homodimer.

It localises to the cytoplasm. The catalysed reaction is tRNA(Asx) + L-aspartate + ATP = L-aspartyl-tRNA(Asx) + AMP + diphosphate. Its function is as follows. Aspartyl-tRNA synthetase with relaxed tRNA specificity since it is able to aspartylate not only its cognate tRNA(Asp) but also tRNA(Asn). Reaction proceeds in two steps: L-aspartate is first activated by ATP to form Asp-AMP and then transferred to the acceptor end of tRNA(Asp/Asn). This is Aspartate--tRNA(Asp/Asn) ligase from Rickettsia canadensis (strain McKiel).